We begin with the raw amino-acid sequence, 78 residues long: Sec-independent protein translocase protein TatA (78 aa).

The chain crosses the membrane as a helical span at residues 1 to 21 (MGSLSIWHWIVVVAVILLLFG). Residues 43-55 (MKDDEKTAEKPEP) are compositionally biased toward basic and acidic residues. The segment at 43-78 (MKDDEKTAEKPEPVKTINHNADGSGAARSDTGSKVI) is disordered.

It belongs to the TatA/E family. In terms of assembly, the Tat system comprises two distinct complexes: a TatABC complex, containing multiple copies of TatA, TatB and TatC subunits, and a separate TatA complex, containing only TatA subunits. Substrates initially bind to the TatABC complex, which probably triggers association of the separate TatA complex to form the active translocon.

The protein resides in the cell inner membrane. Functionally, part of the twin-arginine translocation (Tat) system that transports large folded proteins containing a characteristic twin-arginine motif in their signal peptide across membranes. TatA could form the protein-conducting channel of the Tat system. In Nitrobacter winogradskyi (strain ATCC 25391 / DSM 10237 / CIP 104748 / NCIMB 11846 / Nb-255), this protein is Sec-independent protein translocase protein TatA.